An 84-amino-acid polypeptide reads, in one-letter code: Transcriptional regulator WhiB1 (84 aa).

A 4Fe-4S Wbl-type domain is found at 8–70 (VCRDEDPELF…GGMSEDERRA (63 aa)). [4Fe-4S] cluster is bound by residues C9, C37, C40, and C46.

This sequence belongs to the WhiB family. Homodimer. [4Fe-4S] cluster serves as cofactor. The Fe-S cluster can be nitrosylated by nitric oxide (NO). Post-translationally, upon Fe-S cluster removal intramolecular disulfide bonds are formed.

The protein resides in the cytoplasm. Functionally, acts as a transcriptional regulator. Probably redox-responsive. The apo- but not holo-form probably binds DNA. The protein is Transcriptional regulator WhiB1 (whiB1) of Mycobacterium tuberculosis (strain CDC 1551 / Oshkosh).